The following is a 341-amino-acid chain: ATP synthase subunit a 2 (341 aa).

The first 33 residues, 1–33, serve as a signal peptide directing secretion; the sequence is MKRVKVIQIKGFFRVMALLAPLLLNAYLPVQAS. The next 6 membrane-spanning stretches (helical) occupy residues 112-132, 173-193, 195-215, 242-262, 273-293, and 307-327; these read VVML…VGAA, LPYL…GLIP, GATA…TFFI, WIIM…ALTV, IVIL…VAAA, and IFVA…FIGL.

It belongs to the ATPase A chain family. As to quaternary structure, F-type ATPases have 2 components, CF(1) - the catalytic core - and CF(0) - the membrane proton channel. CF(1) has five subunits: alpha(3), beta(3), gamma(1), delta(1), epsilon(1). CF(0) has four main subunits: a, b, b' and c.

The protein resides in the cell inner membrane. In terms of biological role, key component of the proton channel; it plays a direct role in the translocation of protons across the membrane. The sequence is that of ATP synthase subunit a 2 from Chlorobium luteolum (strain DSM 273 / BCRC 81028 / 2530) (Pelodictyon luteolum).